Reading from the N-terminus, the 276-residue chain is CTD small phosphatase-like protein (276 aa).

The disordered stretch occupies residues 1–31; it reads MDGPAIITQVTNPKEDEARSPVAGEKASQRN. The FCP1 homology domain occupies 102-260; that stretch reads LDYGKKCVVI…LDLIPFFEGL (159 aa). Asp112 functions as the 4-aspartylphosphate intermediate in the catalytic mechanism. Asp112, Asp114, and Asn223 together coordinate Mg(2+). The active-site Proton donor is the Asp114.

As to quaternary structure, monomer. Interacts with REST. Mg(2+) serves as cofactor.

Its subcellular location is the nucleus. The enzyme catalyses O-phospho-L-seryl-[protein] + H2O = L-seryl-[protein] + phosphate. It carries out the reaction O-phospho-L-threonyl-[protein] + H2O = L-threonyl-[protein] + phosphate. Functionally, preferentially catalyzes the dephosphorylation of 'Ser-5' within the tandem 7 residue repeats in the C-terminal domain (CTD) of the largest RNA polymerase II subunit POLR2A. Negatively regulates RNA polymerase II transcription, possibly by controlling the transition from initiation/capping to processive transcript elongation. Recruited by REST to neuronal genes that contain RE-1 elements, leading to neuronal gene silencing in non-neuronal cells. This Mus musculus (Mouse) protein is CTD small phosphatase-like protein (Ctdspl).